Here is a 366-residue protein sequence, read N- to C-terminus: Proline-rich protein 19 (366 aa).

Disordered stretches follow at residues 1 to 53, 102 to 149, 256 to 286, and 301 to 338; these read MDPR…RDPC, ESHT…DLPV, TPAH…AAWG, and ATPP…WSPN. Residues 18 to 29 show a composition bias toward basic residues; the sequence is GRIRRRKTRRER. Composition is skewed to polar residues over residues 104–113 and 256–265; these read HTPQLPTKPS and TPAHRGSQVQ. A compositionally biased stretch (low complexity) spans 275–286; the sequence is SSASSPSGAAWG. Over residues 302–326 the composition is skewed to pro residues; it reads TPPPPPPQPWDVRPPQPLPQPPSPL.

As to quaternary structure, interacts with CNTD1. Preferentially expressed in gonads.

Its subcellular location is the nucleus. It localises to the chromosome. Functionally, promotes meiotic crossing over formation through its interaction with CNTD1 by participating in the crossover differentiation step of crossover-specific recombination intermediates. This is Proline-rich protein 19 from Mus musculus (Mouse).